The sequence spans 1255 residues: DNA-directed RNA polymerase subunit beta' (1255 aa).

The Zn(2+) site is built by cysteine 60, cysteine 62, cysteine 77, and cysteine 80. Residues aspartate 503, aspartate 505, and aspartate 507 each coordinate Mg(2+). Zn(2+) is bound by residues cysteine 875, cysteine 950, cysteine 957, and cysteine 960.

This sequence belongs to the RNA polymerase beta' chain family. In terms of assembly, the RNAP catalytic core consists of 2 alpha, 1 beta, 1 beta' and 1 omega subunit. When a sigma factor is associated with the core the holoenzyme is formed, which can initiate transcription. The cofactor is Mg(2+). Requires Zn(2+) as cofactor.

The enzyme catalyses RNA(n) + a ribonucleoside 5'-triphosphate = RNA(n+1) + diphosphate. Functionally, DNA-dependent RNA polymerase catalyzes the transcription of DNA into RNA using the four ribonucleoside triphosphates as substrates. This Mycoplasma capricolum subsp. capricolum (strain California kid / ATCC 27343 / NCTC 10154) protein is DNA-directed RNA polymerase subunit beta'.